The sequence spans 304 residues: Negative regulator of the PHO system (304 aa).

The Protein kinase domain maps to Phe-7–Phe-297. ATP-binding positions include Val-13 to Val-21 and Lys-36. Asp-133 serves as the catalytic Proton acceptor.

Belongs to the protein kinase superfamily. CMGC Ser/Thr protein kinase family. CDC2/CDKX subfamily. As to quaternary structure, interacts with a number of cyclins.

The catalysed reaction is L-seryl-[protein] + ATP = O-phospho-L-seryl-[protein] + ADP + H(+). It carries out the reaction L-threonyl-[protein] + ATP = O-phospho-L-threonyl-[protein] + ADP + H(+). In terms of biological role, when phosphate concentrations are high it phosphorylates the PHO4 transcription factor thus establishing repression. This chain is Negative regulator of the PHO system (PHO85), found in Kluyveromyces lactis (strain ATCC 8585 / CBS 2359 / DSM 70799 / NBRC 1267 / NRRL Y-1140 / WM37) (Yeast).